We begin with the raw amino-acid sequence, 316 residues long: Homoserine kinase (316 aa).

Residue 97–107 (PPARGLGSSAS) coordinates ATP.

It belongs to the GHMP kinase family. Homoserine kinase subfamily.

It localises to the cytoplasm. It carries out the reaction L-homoserine + ATP = O-phospho-L-homoserine + ADP + H(+). Its pathway is amino-acid biosynthesis; L-threonine biosynthesis; L-threonine from L-aspartate: step 4/5. Functionally, catalyzes the ATP-dependent phosphorylation of L-homoserine to L-homoserine phosphate. This Prochlorococcus marinus (strain MIT 9313) protein is Homoserine kinase.